A 113-amino-acid chain; its full sequence is U11-theraphotoxin-Hhn1d (113 aa).

Residues 1 to 21 (MNTVRVTFLLVFVVAVSLGQA) form the signal peptide. A propeptide spanning residues 22–74 (DKDENRMEMKDKTEQGKSYLHFAENLLLQKLEDVEAKLLEKDSEKSINSRQKR) is cleaved from the precursor. 3 disulfide bridges follow: Cys-75/Cys-90, Cys-82/Cys-95, and Cys-89/Cys-110.

This sequence belongs to the neurotoxin 14 (magi-1) family. 01 (HNTX-16) subfamily. Expressed by the venom gland.

It localises to the secreted. Its function is as follows. Probable ion channel inhibitor. This chain is U11-theraphotoxin-Hhn1d, found in Cyriopagopus hainanus (Chinese bird spider).